Reading from the N-terminus, the 396-residue chain is 3-hydroxykynurenine transaminase (396 aa).

Residues 43 to 44 (SN) form a binds to and confers specificity for 3-hydroxykynurenine; shared with dimeric partner region. Pyridoxal 5'-phosphate contacts are provided by residues 77-79 (SAH), S154, and Q204. S154 lines the substrate pocket. K205 bears the N6-(pyridoxal phosphate)lysine mark. Positions 256 and 259 each coordinate pyridoxal 5'-phosphate. R356 is a substrate binding site.

Belongs to the class-V pyridoxal-phosphate-dependent aminotransferase family. In terms of assembly, homodimer. The cofactor is pyridoxal 5'-phosphate. As to expression, expressed in gut and ovaries.

The protein resides in the peroxisome. The catalysed reaction is L-kynurenine + glyoxylate = kynurenate + glycine + H2O. It catalyses the reaction 3-hydroxy-L-kynurenine + glyoxylate = xanthurenate + glycine + H2O. The enzyme catalyses 3-hydroxy-L-kynurenine + pyruvate = xanthurenate + L-alanine + H2O. It carries out the reaction glyoxylate + L-alanine = glycine + pyruvate. It participates in amino-acid degradation; L-kynurenine degradation; kynurenate from L-kynurenine: step 1/2. In terms of biological role, catalyzes the pyridoxal 5'-phosphate-dependent transamination of both 3-hydroxykynurenine and L-kynurenine to xanthurenic acid and kynurenic acid, respectively, preferentially using the alpha-ketoacid glyoxylate as the amino group acceptor. Although glyoxylate is the preferred amino group acceptor, transamination of 3-hydroxykynurenine also works with pyruvate as the amino acceptor in vitro. Involved in the detoxification of cytotoxic metabolite 3-hydroxykynurenine generated by the hydroxylation of L-kynurenine, an intermediate in the tryptophan catabolism pathway. The Plasmodium parasite uses xanthurenic acid produced in the midgut to activate its gametocytes ingested during a blood meal. Also catalyzes, although with a lesser efficiency, the transamination of alanine with glyoxylate as an amino group acceptor. May play a role in the detoxification of glyoxylate, a toxic plant metabolite from the diet. This is 3-hydroxykynurenine transaminase from Anopheles gambiae (African malaria mosquito).